Consider the following 2200-residue polypeptide: Bromodomain and WD repeat-containing DDB_G0285837 (2200 aa).

Disordered regions lie at residues Gly137–Asn178, Val194–Pro245, and Asp259–Asn288. Low complexity-rich tracts occupy residues Asn161–Asn176, Asn203–Thr242, and Asp259–Gln273. 8 WD repeats span residues Gly352 to Thr391, Gly394 to Ile433, Ser442 to Ser483, Gly548 to Val586, Gly591 to His630, Arg653 to Glu691, Glu694 to Val736, and Gly741 to Asn780. Acidic residues-rich tracts occupy residues Asp918–Asn933 and Gln955–Asp968. 4 disordered regions span residues Asp918–Thr1180, Asn1262–Asp1297, Glu1461–Asn1538, and Asn1662–Asn1703. A compositionally biased stretch (basic residues) spans Met974–Arg1000. The span at Gly1052–Asp1074 shows a compositional bias: acidic residues. The span at Ser1109–Ser1132 shows a compositional bias: low complexity. Residues Asn1133 to Ser1164 show a composition bias toward basic residues. 2 stretches are compositionally biased toward low complexity: residues Asn1262–Asn1292 and Glu1461–Asn1525. The Bromo domain occupies Glu1722 to Ala1823. The disordered stretch occupies residues Asp1850 to Asn2200. Residues Leu1878–Ser1888 are compositionally biased toward low complexity. Polar residues predominate over residues Thr1910–Ser1920. A compositionally biased stretch (low complexity) spans Thr1945–Thr1958. Composition is skewed to acidic residues over residues Asp2016–Gly2028, Glu2057–Tyr2073, and Ser2104–Ser2113. Residues Asp2114–Glu2124 show a composition bias toward low complexity. Over residues Ser2125–Glu2138 the composition is skewed to acidic residues. Residues Ser2170–Asn2185 show a composition bias toward low complexity. Basic residues predominate over residues Lys2190 to Asn2200.

The chain is Bromodomain and WD repeat-containing DDB_G0285837 from Dictyostelium discoideum (Social amoeba).